The following is a 577-amino-acid chain: Protein CBFA2T1 (577 aa).

Positions 1–10 (MPDRTEKHST) are enriched in basic and acidic residues. The interval 1–87 (MPDRTEKHST…SSSSLANQQL (87 aa)) is disordered. Serine 14 is modified (phosphoserine). Over residues 42 to 59 (SSFTPTTLTNGTSHSPTA) the composition is skewed to polar residues. Positions 68-87 (NGFSNGPSSSSSSSLANQQL) are enriched in low complexity. The TAFH domain occupies 93–188 (ARQLSKLKRF…NPAQYLAQHE (96 aa)). A disordered region spans residues 203-271 (SELLLDVNEN…LPHPTPPPPQ (69 aa)). The segment covering 211-237 (ENGKRRTPDRTKENGFDREPLHSEHPS) has biased composition (basic and acidic residues). The segment covering 244–258 (SPGQRYSPNNGLSYQ) has biased composition (polar residues). Positions 262–271 (LPHPTPPPPQ) are enriched in pro residues. The interval 310-356 (QEEMIDHRLTDREWAEEWKHLDHLLNCIMDMVEKTRRSLTVLRRCQE) is important for oligomerization. The tract at residues 310-356 (QEEMIDHRLTDREWAEEWKHLDHLLNCIMDMVEKTRRSLTVLRRCQE) is nervy homology region 2 (NHR2). The disordered stretch occupies residues 374–396 (DLKKGGSSSSSHSRQQSPVNPDP). Over residues 380-390 (SSSSSHSRQQS) the composition is skewed to low complexity. Residue serine 390 is modified to Phosphoserine. The tract at residues 416–465 (EEIWKKAEEAVNEVKRQAMTELQKAVSEAERKAHDMITTERAKMERTVAE) is nervy homology region 3 (NHR3). Residues cysteine 488, cysteine 491, cysteine 499, cysteine 502, cysteine 508, cysteine 512, histidine 520, and cysteine 524 each coordinate Zn(2+). An MYND-type zinc finger spans residues 488–524 (CWNCGRKASETCSGCNTARYCGSFCQHKDWEKHHHIC). The interval 529 to 577 (QAPQQGDTPAVSSSVTPSSGAGSPMDTPPAATPRSTTPGTPSTIETTPR) is disordered. Composition is skewed to low complexity over residues 536–553 (TPAV…GSPM) and 560–577 (TPRS…TTPR).

It belongs to the CBFA2T family. Homotetramer. Heterotetramer with CBFA2T2 and CBFA2T3. Interacts with TCF12, SIN3A, HDAC1, HDAC2, HDAC3, NCOR1 and NCOR2. Interacts with ATN1 (via its N-terminus); the interaction enhances the transcriptional repression.

It localises to the nucleus. Its function is as follows. Transcriptional corepressor which facilitates transcriptional repression via its association with DNA-binding transcription factors and recruitment of other corepressors and histone-modifying enzymes. Can repress the expression of MMP7 in a ZBTB33-dependent manner. Can repress transactivation mediated by TCF12. Acts as a negative regulator of adipogenesis. The sequence is that of Protein CBFA2T1 (Runx1t1) from Mus musculus (Mouse).